Consider the following 255-residue polypeptide: Small ribosomal subunit protein uS2 (255 aa).

The tract at residues 226-255 is disordered; that stretch reads QGVSNEEVAAEQNIDLDEKEKSEETEATEE.

This sequence belongs to the universal ribosomal protein uS2 family.

The sequence is that of Small ribosomal subunit protein uS2 from Staphylococcus aureus (strain JH1).